The chain runs to 249 residues: NH(3)-dependent NAD(+) synthetase (249 aa).

Residue D34 participates in Mg(2+) binding. R110 contacts deamido-NAD(+). T130 provides a ligand contact to ATP. E135 is a binding site for Mg(2+). Deamido-NAD(+)-binding residues include K143 and D150. ATP is bound by residues K159 and S181. Position 232 to 233 (H232 to K233) interacts with deamido-NAD(+).

Belongs to the NAD synthetase family. Homodimer.

It carries out the reaction deamido-NAD(+) + NH4(+) + ATP = AMP + diphosphate + NAD(+) + H(+). It participates in cofactor biosynthesis; NAD(+) biosynthesis; NAD(+) from deamido-NAD(+) (ammonia route): step 1/1. Catalyzes the ATP-dependent amidation of deamido-NAD to form NAD. Uses ammonia as a nitrogen source. This is NH(3)-dependent NAD(+) synthetase from Picrophilus torridus (strain ATCC 700027 / DSM 9790 / JCM 10055 / NBRC 100828 / KAW 2/3).